A 321-amino-acid chain; its full sequence is High osmolarity signaling protein SHO1A (321 aa).

Topologically, residues 1-28 (MDYNNNRYGGGGGGSKFNLGHIVGDPFS) are cytoplasmic. The helical transmembrane segment at 29-49 (LATIAIATAGWLIAFVSSIIA) threads the bilayer. Topologically, residues 50 to 58 (NIDQEYPNY) are extracellular. Residue asparagine 57 is glycosylated (N-linked (GlcNAc...) asparagine). Residues 59 to 79 (SWWALAYMFFVILGVTFAVAA) form a helical membrane-spanning segment. Asparagine 80 is a topological domain (cytoplasmic). Residues 81-101 (AVYTYHVAMVGFLAAGLVFTT) form a helical membrane-spanning segment. Residues 102–116 (SSVNSLIYWSDKAKQ) lie on the Extracellular side of the membrane. A helical transmembrane segment spans residues 117 to 137 (AAAAGFILLSMVSIVWIFYFG). At 138-321 (SQPTASHRQT…IAPSNYLILL (184 aa)) the chain is on the cytoplasmic side. 2 disordered regions span residues 155–181 (KDHAPSRASRHMTQSYRPETTHSAQHP) and 194–261 (TSSP…QQPT). Composition is skewed to polar residues over residues 165-181 (HMTQSYRPETTHSAQHP) and 225-237 (NFSNNQQPNPITS). Positions 238-249 (QNNPQNQHQQPQ) are enriched in low complexity. The segment covering 250-261 (DLTSPSTTQQPT) has biased composition (polar residues). The region spanning 262-321 (EYPYRAKAIYSYEANPDDANEISFNKHEILEVSDVSGRWWQAKKENGETGIAPSNYLILL) is the SH3 domain.

This sequence belongs to the SHO1 family. Forms homooligomers.

It is found in the cell membrane. In terms of biological role, plasma membrane osmosensor that activates the high osmolarity glycerol (HOG) MAPK signaling pathway in response to high osmolarity. The chain is High osmolarity signaling protein SHO1A (SHO1A) from Hortaea werneckii.